The primary structure comprises 62 residues: Protein YnfQ (62 aa).

Belongs to the YmcF/YnqF peptide family.

This Escherichia coli (strain K12) protein is Protein YnfQ.